Here is a 507-residue protein sequence, read N- to C-terminus: MEALWTLTLALAAGLAAASPPNILLIFADDLGYGDLGSYGHPSSTTPNLDQLAAGGLRFTDFYVPVSLCTPSRAALLTGRLPVRMGLYPGVLEPSSRGGLPLDEVTLAEVLAAQGYLTGIAGKWHLGVGPEGAFLPPHHGFHRFLGIPYSHDQGPCQNLTCFPPATPCEGICDQGLVPIPLLANLSVEAQPPWLPGLEARYVAFARDLMTDAQHQGRPFFLYYASHHTHYPQFSGQSFPGHSGRGPFGDSLMELDAAVGALMTAVGDLGLLGETLVFFTADNGPETMRMSHGGCSGLLRCGKGTTFEGGVREPALAFWPGHIAPGVTHELASSLDLLPTLAALAGAQLPNITLDGVDLSPLLLGTGKSPRHTLFFYSAYPDEVRGVFAVRSGKYKAHFFTQGSVHSDTTADPACHASNPLTAHEPPLLFDLSEDPGENYNLLDSVDEVAPEALQAVKQLELLKAQFDAAMTFGPSQMAQGEDPTLQVCCQPSCTPRPSCCHCPEFQP.

An N-terminal signal peptide occupies residues 1 to 18 (MEALWTLTLALAAGLAAA). The Ca(2+) site is built by aspartate 29, aspartate 30, and cysteine 69. Cysteine 69 (nucleophile) is an active-site residue. Residue cysteine 69 is modified to 3-oxoalanine (Cys). Substrate is bound at residue lysine 123. Histidine 125 is a catalytic residue. Serine 150 is a substrate binding site. Cystine bridges form between cysteine 156–cysteine 172 and cysteine 161–cysteine 168. N-linked (GlcNAc...) asparagine glycosylation occurs at asparagine 158. Asparagine 184 is a glycosylation site (N-linked (GlcNAc...) asparagine). Residue histidine 229 coordinates substrate. The Ca(2+) site is built by aspartate 281 and asparagine 282. Intrachain disulfides connect cysteine 300-cysteine 414, cysteine 488-cysteine 500, cysteine 489-cysteine 502, and cysteine 493-cysteine 499. Lysine 302 contacts substrate. Asparagine 350 is a glycosylation site (N-linked (GlcNAc...) asparagine).

This sequence belongs to the sulfatase family. In terms of assembly, homodimer at neutral pH and homooctamer at acidic pH. Exists both as a single chain of 58 kDa (component A) or as a chain of 50 kDa (component B) linked by disulfide bond(s) to a 7 kDa chain (component C). Interacts with SUMF1. Requires Ca(2+) as cofactor. The conversion to 3-oxoalanine (also known as C-formylglycine, FGly), of a serine or cysteine residue in prokaryotes and of a cysteine residue in eukaryotes, is critical for catalytic activity. This post-translational modification is severely defective in multiple sulfatase deficiency (MSD).

The protein localises to the endoplasmic reticulum. It is found in the lysosome. The catalysed reaction is an N-acyl-1-beta-D-(3-O-sulfo)-galactosyl-sphing-4-enine + H2O = a beta-D-galactosyl-(1&lt;-&gt;1')-N-acylsphing-4-enine + sulfate + H(+). Functionally, hydrolyzes cerebroside sulfate. The sequence is that of Arylsulfatase A (ARSA) from Bos taurus (Bovine).